The chain runs to 490 residues: Betaine aldehyde dehydrogenase (490 aa).

K(+) is bound at residue D93. Residue 150-152 (GAW) participates in NAD(+) binding. Catalysis depends on K162, which acts as the Charge relay system. Residue 176 to 179 (KPSE) coordinates NAD(+). K(+) is bound at residue V180. 230-233 (GVKT) lines the NAD(+) pocket. A K(+)-binding site is contributed by L246. E252 (proton acceptor) is an active-site residue. G254, C286, and E387 together coordinate NAD(+). C286 acts as the Nucleophile in catalysis. C286 carries the cysteine sulfenic acid (-SOH) modification. Residues K457 and G460 each contribute to the K(+) site. The active-site Charge relay system is the E464.

It belongs to the aldehyde dehydrogenase family. As to quaternary structure, dimer of dimers. It depends on K(+) as a cofactor.

The catalysed reaction is betaine aldehyde + NAD(+) + H2O = glycine betaine + NADH + 2 H(+). Its pathway is amine and polyamine biosynthesis; betaine biosynthesis via choline pathway; betaine from betaine aldehyde: step 1/1. Functionally, involved in the biosynthesis of the osmoprotectant glycine betaine. Catalyzes the irreversible oxidation of betaine aldehyde to the corresponding acid. This is Betaine aldehyde dehydrogenase from Serratia proteamaculans (strain 568).